The sequence spans 699 residues: DnaJ homolog subfamily C member 14 (699 aa).

Residues 1-230 (MAQKHPGEGG…RHRLGRKRSQ (230 aa)) are disordered. A compositionally biased stretch (pro residues) spans 75-84 (HGPPRGPGPP). A compositionally biased stretch (acidic residues) spans 86–102 (AEEDPDQSEASSEESGV). Polar residues predominate over residues 117 to 133 (DGNSSFLSIPSTCNCQG). The span at 163 to 176 (GEDEELEGEYDEEE) shows a compositional bias: acidic residues. Residues 203-218 (PAKEDTREGGRRDPRS) are compositionally biased toward basic and acidic residues. Basic residues predominate over residues 219 to 228 (PGRHRLGRKR). 3 consecutive transmembrane segments (helical) span residues 251-271 (AGFW…ETCG), 301-321 (GWAQ…AGLF), and 327-347 (LVGA…QLGW). The J domain maps to 444 to 508 (NPFHVLGVEA…ERRKEYEMKR (65 aa)). A disordered region spans residues 655 to 699 (MSNGNFFAAPQPGPGATAASKPNSTVPKGEAKPKRRKKVRRPFQR). The span at 662–673 (AAPQPGPGATAA) shows a compositional bias: low complexity. A compositionally biased stretch (basic residues) spans 687–699 (PKRRKKVRRPFQR).

As to quaternary structure, interacts with the FxxxFxxxF motif of DRD1 via its C-terminal domain. Interacts with pestivirus nonstructural protein NS2.

Its subcellular location is the endoplasmic reticulum membrane. Its function is as follows. Regulates the export of target proteins, such as DRD1, from the endoplasmic reticulum to the cell surface. Promotes cleavage of pestivirus polyprotein. The protein is DnaJ homolog subfamily C member 14 (DNAJC14) of Bos taurus (Bovine).